The sequence spans 452 residues: Pup--protein ligase (452 aa).

Mg(2+) is bound at residue glutamate 9. Position 53 (arginine 53) interacts with ATP. Tyrosine 55 is a Mg(2+) binding site. Aspartate 57 functions as the Proton acceptor in the catalytic mechanism. Position 63 (glutamate 63) interacts with Mg(2+). Residues threonine 66 and tryptophan 419 each coordinate ATP.

The protein belongs to the Pup ligase/Pup deamidase family. Pup-conjugating enzyme subfamily.

The enzyme catalyses ATP + [prokaryotic ubiquitin-like protein]-L-glutamate + [protein]-L-lysine = ADP + phosphate + N(6)-([prokaryotic ubiquitin-like protein]-gamma-L-glutamyl)-[protein]-L-lysine.. The protein operates within protein degradation; proteasomal Pup-dependent pathway. Its pathway is protein modification; protein pupylation. Catalyzes the covalent attachment of the prokaryotic ubiquitin-like protein modifier Pup to the proteasomal substrate proteins, thereby targeting them for proteasomal degradation. This tagging system is termed pupylation. The ligation reaction involves the side-chain carboxylate of the C-terminal glutamate of Pup and the side-chain amino group of a substrate lysine. This Saccharomonospora viridis (strain ATCC 15386 / DSM 43017 / JCM 3036 / CCUG 5913 / NBRC 12207 / NCIMB 9602 / P101) (Thermoactinomyces viridis) protein is Pup--protein ligase.